We begin with the raw amino-acid sequence, 188 residues long: ATP synthase subunit delta (188 aa).

This sequence belongs to the ATPase delta chain family. In terms of assembly, F-type ATPases have 2 components, F(1) - the catalytic core - and F(0) - the membrane proton channel. F(1) has five subunits: alpha(3), beta(3), gamma(1), delta(1), epsilon(1). F(0) has three main subunits: a(1), b(2) and c(10-14). The alpha and beta chains form an alternating ring which encloses part of the gamma chain. F(1) is attached to F(0) by a central stalk formed by the gamma and epsilon chains, while a peripheral stalk is formed by the delta and b chains.

It is found in the cell inner membrane. F(1)F(0) ATP synthase produces ATP from ADP in the presence of a proton or sodium gradient. F-type ATPases consist of two structural domains, F(1) containing the extramembraneous catalytic core and F(0) containing the membrane proton channel, linked together by a central stalk and a peripheral stalk. During catalysis, ATP synthesis in the catalytic domain of F(1) is coupled via a rotary mechanism of the central stalk subunits to proton translocation. In terms of biological role, this protein is part of the stalk that links CF(0) to CF(1). It either transmits conformational changes from CF(0) to CF(1) or is implicated in proton conduction. The protein is ATP synthase subunit delta of Paracoccus denitrificans (strain Pd 1222).